A 351-amino-acid chain; its full sequence is Tryptophan--tRNA ligase (351 aa).

ATP contacts are provided by residues 11-13 and 19-20; these read RPT and GH. A 'HIGH' region motif is present at residues 12-20; the sequence is PTGALHLGH. Residue Asp139 participates in L-tryptophan binding. Residues 151–153, Leu190, and 198–202 each bind ATP; these read GRD and KMSKS. The 'KMSKS' region signature appears at 198–202; it reads KMSKS.

This sequence belongs to the class-I aminoacyl-tRNA synthetase family. Homodimer.

The protein resides in the cytoplasm. The enzyme catalyses tRNA(Trp) + L-tryptophan + ATP = L-tryptophyl-tRNA(Trp) + AMP + diphosphate + H(+). In terms of biological role, catalyzes the attachment of tryptophan to tRNA(Trp). The polypeptide is Tryptophan--tRNA ligase (Borreliella burgdorferi (strain ATCC 35210 / DSM 4680 / CIP 102532 / B31) (Borrelia burgdorferi)).